We begin with the raw amino-acid sequence, 39 residues long: U1-nemetoxin-Csp1c (39 aa).

Cystine bridges form between Cys1–Cys15, Cys8–Cys19, Cys14–Cys36, and Cys25–Cys32.

Expressed by the venom gland.

It localises to the secreted. In terms of biological role, causes paralysis to insect larvae (H.virescens). This toxin is active only on insects. This Calisoga sp. (Spider) protein is U1-nemetoxin-Csp1c.